The primary structure comprises 1399 residues: Dicer-like protein 2 (1399 aa).

The region spanning 18–194 is the Helicase ATP-binding domain; sequence MVEESMQSNI…EDLQQIERNL (177 aa). 31 to 38 lines the ATP pocket; that stretch reads MDTGSGKT. The short motif at 139 to 142 is the DEAH box element; the sequence is DEAH. The Helicase C-terminal domain occupies 364–549; the sequence is KLQLLIKFLV…QSETGHRNFE (186 aa). A Dicer dsRNA-binding fold domain is found at 562–656; that stretch reads ASQHLHHFCS…LPARQEADDE (95 aa). RNase III domains lie at 897-1054 and 1094-1270; these read LPSI…TVGG and LDVL…IDSL. Mg(2+) contacts are provided by glutamate 1133, aspartate 1256, and glutamate 1259. The DRBM domain occupies 1301-1370; that stretch reads HPKERLGHLA…AWKAVGVLES (70 aa).

It belongs to the helicase family. Dicer subfamily. It depends on Mg(2+) as a cofactor. The cofactor is Mn(2+).

Dicer-like endonuclease involved in cleaving double-stranded RNA in the RNA interference (RNAi) pathway. Produces 21 to 25 bp dsRNAs (siRNAs) which target the selective destruction of homologous RNAs leading to sequence-specific suppression of gene expression, called post-transcriptional gene silencing (PTGS). Part of a broad host defense response against viral infection and transposons. In Phaeosphaeria nodorum (strain SN15 / ATCC MYA-4574 / FGSC 10173) (Glume blotch fungus), this protein is Dicer-like protein 2 (DCL2).